The following is a 658-amino-acid chain: Integrator complex subunit 9 (658 aa).

1D-myo-inositol hexakisphosphate contacts are provided by K2 and F19. A Glycyl lysine isopeptide (Lys-Gly) (interchain with G-Cter in SUMO2) cross-link involves residue K58. 1D-myo-inositol hexakisphosphate contacts are provided by K510 and R511. Residues 548–574 are disordered; sequence DNKHLLQPPPRPAQPTSGKKRKRVSDD. The short motif at 566–570 is the Nuclear localization signal element; the sequence is KKRKR.

The protein belongs to the metallo-beta-lactamase superfamily. RNA-metabolizing metallo-beta-lactamase-like family. INTS9 subfamily. As to quaternary structure, component of the Integrator complex, composed of core subunits INTS1, INTS2, INTS3, INTS4, INTS5, INTS6, INTS7, INTS8, INTS9/RC74, INTS10, INTS11/CPSF3L, INTS12, INTS13, INTS14 and INTS15. The core complex associates with protein phosphatase 2A subunits PPP2CA and PPP2R1A, to form the Integrator-PP2A (INTAC) complex. INTS9 is part of the RNA endonuclease subcomplex, composed of INTS4, INTS9, INTS11 and inositol hexakisphosphate (InsP6). Interacts with WDR73; interaction is required for the assembly of the RNA endonuclease subcomplex in the cytoplasm. Interacts with BRAT1; interaction is required for the assembly of the RNA endonuclease subcomplex. Interacts with ESRRB, ESRRB is not a core component of the Integrator complex and this association is a bridge for the interaction with the multiprotein complex Integrator; attracts the transcriptional machinery.

The protein resides in the nucleus. It is found in the cytoplasm. In terms of biological role, component of the integrator complex, a multiprotein complex that terminates RNA polymerase II (Pol II) transcription in the promoter-proximal region of genes. The integrator complex provides a quality checkpoint during transcription elongation by driving premature transcription termination of transcripts that are unfavorably configured for transcriptional elongation: the complex terminates transcription by (1) catalyzing dephosphorylation of the C-terminal domain (CTD) of Pol II subunit POLR2A/RPB1 and SUPT5H/SPT5, (2) degrading the exiting nascent RNA transcript via endonuclease activity and (3) promoting the release of Pol II from bound DNA. The integrator complex is also involved in terminating the synthesis of non-coding Pol II transcripts, such as enhancer RNAs (eRNAs), small nuclear RNAs (snRNAs), telomerase RNAs and long non-coding RNAs (lncRNAs). Mediates recruitment of cytoplasmic dynein to the nuclear envelope, probably as component of the integrator complex. The polypeptide is Integrator complex subunit 9 (Homo sapiens (Human)).